The sequence spans 704 residues: Protein NBR1 homolog (704 aa).

Position 1 is an N-acetylmethionine (M1). Residues 7 to 92 form the PB1 domain; sequence ALVVKVSYGG…KFLKINVNAG (86 aa). Polar residues-rich tracts occupy residues 95–108, 171–189, and 223–233; these read TNSA…SSTP, PQES…SGAS, and HSKTSGHVPNS. Disordered regions lie at residues 95 to 114 and 171 to 233; these read TNSA…MPNP and PQES…VPNS. The ZZ-type; degenerate zinc-finger motif lies at 286-336; that stretch reads HKGIRCDGCGVLPITGPRFKSKVKEDYDLCTICYSVMGNEGDYTRMDKPVS. Zn(2+) is bound by residues C291, C294, C315, and C318. Residues 657 to 701 enclose the UBA domain; it reads GVSEWDPILEELQEMGFCDDVTNKRLLKKNNGSIKGVVMDLLTGE. Positions 661-664 match the LIR motif; it reads WDPI.

Homodimer. Interacts with ATG8A, ATG8B, ATG8C, ATG8D, ATG8F and ATG8I. Binds to ubiquitin.

It localises to the cytoplasm. Its subcellular location is the vacuole. In terms of biological role, autophagic substrate degraded in the vacuole by non-selective autophagy. Requires ATG8 protein expression to be recognized as an autophagic substrate. Acts probably as a receptor for autophagosomal degradation of ubiquitinated proteins. Targets ubiquitinated protein aggregates derived from denatured or damaged non-native proteins generated under stress conditions. Functions additively with the E3 ubiquitin-protein ligase CHIP for autophagosomal degradation of proteotoxic aggregates formed under stress conditions. This Arabidopsis thaliana (Mouse-ear cress) protein is Protein NBR1 homolog.